Reading from the N-terminus, the 115-residue chain is Cytochrome c oxidase assembly protein COX16 homolog, mitochondrial (115 aa).

The Mitochondrial matrix portion of the chain corresponds to M1–F6. Residues V7–Q29 traverse the membrane as a helical segment. Over V30–V115 the chain is Mitochondrial intermembrane.

It belongs to the COX16 family.

The protein resides in the mitochondrion inner membrane. Its function is as follows. Required for the assembly of the mitochondrial respiratory chain complex IV (CIV), also known as cytochrome c oxidase. The protein is Cytochrome c oxidase assembly protein COX16 homolog, mitochondrial of Caenorhabditis elegans.